Reading from the N-terminus, the 400-residue chain is Enoyl-[acyl-carrier-protein] reductase [NADH] (400 aa).

NAD(+) contacts are provided by residues 48 to 53 (GSSSGY), 74 to 75 (FE), 111 to 112 (DA), and 139 to 140 (LA). Tyr-225 is a binding site for substrate. Tyr-235 acts as the Proton donor in catalysis. Residues Lys-244 and 273–275 (VVT) each bind NAD(+).

It belongs to the TER reductase family. As to quaternary structure, monomer.

It catalyses the reaction a 2,3-saturated acyl-[ACP] + NAD(+) = a (2E)-enoyl-[ACP] + NADH + H(+). It participates in lipid metabolism; fatty acid biosynthesis. In terms of biological role, involved in the final reduction of the elongation cycle of fatty acid synthesis (FAS II). Catalyzes the reduction of a carbon-carbon double bond in an enoyl moiety that is covalently linked to an acyl carrier protein (ACP). This is Enoyl-[acyl-carrier-protein] reductase [NADH] from Shewanella denitrificans (strain OS217 / ATCC BAA-1090 / DSM 15013).